A 185-amino-acid polypeptide reads, in one-letter code: Ribosome-recycling factor (185 aa).

Belongs to the RRF family.

It localises to the cytoplasm. Its function is as follows. Responsible for the release of ribosomes from messenger RNA at the termination of protein biosynthesis. May increase the efficiency of translation by recycling ribosomes from one round of translation to another. This is Ribosome-recycling factor from Listeria monocytogenes serotype 4a (strain HCC23).